Reading from the N-terminus, the 66-residue chain is Phylloseptin-H8 (66 aa).

Residues 1 to 22 (MAFLKKSLFLVLFLGLVSLSIC) form the signal peptide. The propeptide occupies 23–44 (EEEKRETEEEENDQEEDDKSEE). A disordered region spans residues 25–44 (EKRETEEEENDQEEDDKSEE). Residues 30–41 (EEEENDQEEDDK) are compositionally biased toward acidic residues. The residue at position 65 (Leu-65) is a Leucine amide.

In terms of tissue distribution, expressed by the skin glands.

It localises to the secreted. Functionally, has antimicrobial activity. The chain is Phylloseptin-H8 from Pithecopus hypochondrialis (Orange-legged leaf frog).